Consider the following 112-residue polypeptide: DNA-binding protein TSIB_0525 (112 aa).

The protein belongs to the PDCD5 family.

This is DNA-binding protein TSIB_0525 from Thermococcus sibiricus (strain DSM 12597 / MM 739).